Consider the following 111-residue polypeptide: Large ribosomal subunit protein uL24 (111 aa).

Belongs to the universal ribosomal protein uL24 family. Part of the 50S ribosomal subunit.

In terms of biological role, one of two assembly initiator proteins, it binds directly to the 5'-end of the 23S rRNA, where it nucleates assembly of the 50S subunit. One of the proteins that surrounds the polypeptide exit tunnel on the outside of the subunit. This is Large ribosomal subunit protein uL24 from Chlamydia pneumoniae (Chlamydophila pneumoniae).